The sequence spans 280 residues: Acetylglutamate kinase (280 aa).

Substrate-binding positions include 64–65 (GG), Arg86, and Asn179.

It belongs to the acetylglutamate kinase family. ArgB subfamily.

It localises to the cytoplasm. The catalysed reaction is N-acetyl-L-glutamate + ATP = N-acetyl-L-glutamyl 5-phosphate + ADP. Its pathway is amino-acid biosynthesis; L-arginine biosynthesis; N(2)-acetyl-L-ornithine from L-glutamate: step 2/4. In terms of biological role, catalyzes the ATP-dependent phosphorylation of N-acetyl-L-glutamate. The protein is Acetylglutamate kinase of Campylobacter fetus subsp. fetus (strain 82-40).